A 110-amino-acid polypeptide reads, in one-letter code: PCNA-associated factor (110 aa).

Residue lysine 15 forms a Glycyl lysine isopeptide (Lys-Gly) (interchain with G-Cter in ubiquitin) linkage. A D-box motif is present at residues arginine 23–asparagine 34. Lysine 24 bears the N6-acetyllysine; alternate mark. A Glycyl lysine isopeptide (Lys-Gly) (interchain with G-Cter in ubiquitin); alternate cross-link involves residue lysine 24. 2 positions are modified to phosphoserine: serine 28 and serine 71. The span at serine 28 to serine 39 shows a compositional bias: low complexity. A disordered region spans residues serine 28–glutamate 110. The PIP-box signature appears at glutamine 61 to serine 71. Basic and acidic residues predominate over residues serine 71–glutamine 80. A KEN box motif is present at residues lysine 77 to asparagine 79. Residues glutamate 84–lysine 96 carry the Initiation motif motif.

Interacts (when monoubiquitinated at Lys-15 and Lys-24) with PCNA. Interacts with isoform 2/p33ING1b of ING1. Interacts with BRCA1. Post-translationally, monoubiquitinated at Lys-15 and Lys-24 during normal S phase, promoting its association with PCNA. Also diubiquitinated at these 2 sites. Following DNA damage, monoubiquitin chains at Lys-15 and Lys-24 are probably extended, leading to disrupt the interaction with PCNA. Polyubiquitinated by the APC/C complex at the mitotic exit, leading to its degradation by the proteasome.

It localises to the nucleus. The protein resides in the cytoplasm. Its subcellular location is the perinuclear region. Functionally, PCNA-binding protein that acts as a regulator of DNA repair during DNA replication. Following DNA damage, the interaction with PCNA is disrupted, facilitating the interaction between monoubiquitinated PCNA and the translesion DNA synthesis DNA polymerase eta (POLH) at stalled replisomes, facilitating the bypass of replication-fork-blocking lesions. Also acts as a regulator of centrosome number. The protein is PCNA-associated factor of Mus musculus (Mouse).